A 260-amino-acid chain; its full sequence is Proteasome subunit alpha (260 aa).

Belongs to the peptidase T1A family. The 20S proteasome core is composed of 14 alpha and 14 beta subunits that assemble into four stacked heptameric rings, resulting in a barrel-shaped structure. The two inner rings, each composed of seven catalytic beta subunits, are sandwiched by two outer rings, each composed of seven alpha subunits. The catalytic chamber with the active sites is on the inside of the barrel. Has a gated structure, the ends of the cylinder being occluded by the N-termini of the alpha-subunits. Is capped at one or both ends by the proteasome regulatory ATPase, PAN.

The protein resides in the cytoplasm. The formation of the proteasomal ATPase PAN-20S proteasome complex, via the docking of the C-termini of PAN into the intersubunit pockets in the alpha-rings, triggers opening of the gate for substrate entry. Interconversion between the open-gate and close-gate conformations leads to a dynamic regulation of the 20S proteasome proteolysis activity. Its function is as follows. Component of the proteasome core, a large protease complex with broad specificity involved in protein degradation. The polypeptide is Proteasome subunit alpha (Pyrococcus abyssi (strain GE5 / Orsay)).